A 141-amino-acid chain; its full sequence is Hemoglobin subunit alpha-D (141 aa).

A Globin domain is found at M1–R141. 2 residues coordinate heme b: H58 and H87.

This sequence belongs to the globin family. In terms of assembly, heterotetramer of two alpha-D chains and two beta chains. As to expression, red blood cells.

Involved in oxygen transport from the lung to the various peripheral tissues. This is Hemoglobin subunit alpha-D (HBAD) from Chrysemys picta bellii (Western painted turtle).